A 202-amino-acid chain; its full sequence is Imidazoleglycerol-phosphate dehydratase (202 aa).

Belongs to the imidazoleglycerol-phosphate dehydratase family.

The protein resides in the cytoplasm. It carries out the reaction D-erythro-1-(imidazol-4-yl)glycerol 3-phosphate = 3-(imidazol-4-yl)-2-oxopropyl phosphate + H2O. Its pathway is amino-acid biosynthesis; L-histidine biosynthesis; L-histidine from 5-phospho-alpha-D-ribose 1-diphosphate: step 6/9. This chain is Imidazoleglycerol-phosphate dehydratase, found in Rhizobium meliloti (strain 1021) (Ensifer meliloti).